Consider the following 193-residue polypeptide: MLLSDRDILAAQSAGHISLDPWTPEMVQPASIDVRLDRYFRLFNNHAYTYVDPAENQGALTEQFEVAPDEPWILHPGEFALGSTWEYVKLDPSIAARLEGKSSLGRLGILTHSTAGFIDPGFEGHITLELSNVSTLPVKLWPGMKIGQMCFFQLSSPAEHPYGSKGTGSHYQGQRGPTPSRSYENFYRAHIDD.

Residues 101–106 (KSSLGR), Asp119, 127–129 (TLE), Gln148, Tyr162, and Gln174 contribute to the dCTP site. Glu129 serves as the catalytic Proton donor/acceptor. Positions 162–184 (YGSKGTGSHYQGQRGPTPSRSYE) are disordered. Over residues 167 to 183 (TGSHYQGQRGPTPSRSY) the composition is skewed to polar residues.

Belongs to the dCTP deaminase family. Homotrimer.

It carries out the reaction dCTP + 2 H2O = dUMP + NH4(+) + diphosphate. It functions in the pathway pyrimidine metabolism; dUMP biosynthesis; dUMP from dCTP: step 1/1. In terms of biological role, bifunctional enzyme that catalyzes both the deamination of dCTP to dUTP and the hydrolysis of dUTP to dUMP without releasing the toxic dUTP intermediate. This is dCTP deaminase, dUMP-forming from Bifidobacterium longum (strain DJO10A).